Reading from the N-terminus, the 92-residue chain is Small ribosomal subunit protein uS19 (92 aa).

This sequence belongs to the universal ribosomal protein uS19 family.

Protein S19 forms a complex with S13 that binds strongly to the 16S ribosomal RNA. The sequence is that of Small ribosomal subunit protein uS19 from Bacillus cytotoxicus (strain DSM 22905 / CIP 110041 / 391-98 / NVH 391-98).